The following is a 336-amino-acid chain: MIEADRLISAGTTLPEDVADRAIRPKLLEEYVGQPQVRSQMEIFIKAAKLRGDALDHLLIFGPPGLGKTTLANIVANEMGVNLRTTSGPVLEKAGDLAAMLTNLEPHDVLFIDEIHRLSPVVEEVLYPAMEDYQLDIMIGEGPAARSIKIDLPPFTLIGATTRAGSLTSPLRDRFGIVQRLEFYQVPDLQYIVSRSARFMGLEMSDDGALEVARRARGTPRIANRLLRRVRDFAEVKHDGTISADIAAQALDMLNVDAEGFDYMDRKLLLAVIDKFFGGPVGLDNLAAAIGEERETIEDVLEPYLIQQGFLQRTPRGRMATTRAWNHFGITPPEMP.

The interval 4–184 (ADRLISAGTT…FGIVQRLEFY (181 aa)) is large ATPase domain (RuvB-L). Residues I23, R24, G65, K68, T69, T70, 131–133 (EDY), R174, Y184, and R221 each bind ATP. Mg(2+) is bound at residue T69. The segment at 185 to 255 (QVPDLQYIVS…IAAQALDMLN (71 aa)) is small ATPAse domain (RuvB-S). Residues 258–336 (AEGFDYMDRK…HFGITPPEMP (79 aa)) form a head domain (RuvB-H) region. DNA-binding residues include R294, R313, and R318.

The protein belongs to the RuvB family. In terms of assembly, homohexamer. Forms an RuvA(8)-RuvB(12)-Holliday junction (HJ) complex. HJ DNA is sandwiched between 2 RuvA tetramers; dsDNA enters through RuvA and exits via RuvB. An RuvB hexamer assembles on each DNA strand where it exits the tetramer. Each RuvB hexamer is contacted by two RuvA subunits (via domain III) on 2 adjacent RuvB subunits; this complex drives branch migration. In the full resolvosome a probable DNA-RuvA(4)-RuvB(12)-RuvC(2) complex forms which resolves the HJ.

Its subcellular location is the cytoplasm. The catalysed reaction is ATP + H2O = ADP + phosphate + H(+). In terms of biological role, the RuvA-RuvB-RuvC complex processes Holliday junction (HJ) DNA during genetic recombination and DNA repair, while the RuvA-RuvB complex plays an important role in the rescue of blocked DNA replication forks via replication fork reversal (RFR). RuvA specifically binds to HJ cruciform DNA, conferring on it an open structure. The RuvB hexamer acts as an ATP-dependent pump, pulling dsDNA into and through the RuvAB complex. RuvB forms 2 homohexamers on either side of HJ DNA bound by 1 or 2 RuvA tetramers; 4 subunits per hexamer contact DNA at a time. Coordinated motions by a converter formed by DNA-disengaged RuvB subunits stimulates ATP hydrolysis and nucleotide exchange. Immobilization of the converter enables RuvB to convert the ATP-contained energy into a lever motion, pulling 2 nucleotides of DNA out of the RuvA tetramer per ATP hydrolyzed, thus driving DNA branch migration. The RuvB motors rotate together with the DNA substrate, which together with the progressing nucleotide cycle form the mechanistic basis for DNA recombination by continuous HJ branch migration. Branch migration allows RuvC to scan DNA until it finds its consensus sequence, where it cleaves and resolves cruciform DNA. The sequence is that of Holliday junction branch migration complex subunit RuvB from Escherichia coli (strain ATCC 8739 / DSM 1576 / NBRC 3972 / NCIMB 8545 / WDCM 00012 / Crooks).